A 240-amino-acid polypeptide reads, in one-letter code: tRNA (guanine-N(1)-)-methyltransferase (240 aa).

S-adenosyl-L-methionine is bound by residues Gly-110 and 130–135 (IGDYVL).

Belongs to the RNA methyltransferase TrmD family. Homodimer.

The protein resides in the cytoplasm. The catalysed reaction is guanosine(37) in tRNA + S-adenosyl-L-methionine = N(1)-methylguanosine(37) in tRNA + S-adenosyl-L-homocysteine + H(+). Functionally, specifically methylates guanosine-37 in various tRNAs. The sequence is that of tRNA (guanine-N(1)-)-methyltransferase from Macrococcus caseolyticus (strain JCSC5402) (Macrococcoides caseolyticum).